The sequence spans 386 residues: Putative 8-amino-7-oxononanoate synthase (386 aa).

Arg22 lines the substrate pocket. A pyridoxal 5'-phosphate-binding site is contributed by 109–110 (GY). His134 contacts substrate. Residues Ser182, 207 to 210 (DEAH), and 238 to 241 (TLSK) each bind pyridoxal 5'-phosphate. N6-(pyridoxal phosphate)lysine is present on Lys241. Substrate is bound at residue Thr356.

The protein belongs to the class-II pyridoxal-phosphate-dependent aminotransferase family. BioF subfamily. In terms of assembly, homodimer. Requires pyridoxal 5'-phosphate as cofactor.

It carries out the reaction 6-carboxyhexanoyl-[ACP] + L-alanine + H(+) = (8S)-8-amino-7-oxononanoate + holo-[ACP] + CO2. It participates in cofactor biosynthesis; biotin biosynthesis. Functionally, catalyzes the decarboxylative condensation of pimeloyl-[acyl-carrier protein] and L-alanine to produce 8-amino-7-oxononanoate (AON), [acyl-carrier protein], and carbon dioxide. This chain is Putative 8-amino-7-oxononanoate synthase (bioF), found in Nostoc sp. (strain PCC 7120 / SAG 25.82 / UTEX 2576).